We begin with the raw amino-acid sequence, 551 residues long: Scaffold protein OPG125 (551 aa).

This sequence belongs to the orthopoxvirus protein OPG125 family. In terms of assembly, homotrimer. Self-assembles to form a layer. Interacts with OPG158 (via N-terminus); this interaction is necessary for OPG125 association with membranes.

The protein localises to the membrane. In terms of biological role, scaffold protein which forms a transitory spherical honeycomb lattice providing curvature and rigidity to the convex membrane of crescent and immature virions (IV). This association occurs concomitantly with viral membrane formation. Targeted by the drug rifampicin, which prevents the formation of this lattice, and hence virus morphogenesis. In the presence of rifampicin, irregularly shaped membranes that lack the honeycomb layer accumulate around areas of electron-dense viroplasm. This layer is lost from virions during maturation from IV to mature virion (MV), through the proteolysis of OPG158 N-terminus. The polypeptide is Scaffold protein OPG125 (OPG125) (Vaccinia virus (strain Ankara) (VACV)).